Consider the following 89-residue polypeptide: Small ribosomal subunit protein uS15 (89 aa).

The segment covering 1–11 has biased composition (basic and acidic residues); it reads MSITAERKAEV. The disordered stretch occupies residues 1–24; it reads MSITAERKAEVIKTSATKAGDTGS.

This sequence belongs to the universal ribosomal protein uS15 family. Part of the 30S ribosomal subunit. Forms a bridge to the 50S subunit in the 70S ribosome, contacting the 23S rRNA.

Its function is as follows. One of the primary rRNA binding proteins, it binds directly to 16S rRNA where it helps nucleate assembly of the platform of the 30S subunit by binding and bridging several RNA helices of the 16S rRNA. Functionally, forms an intersubunit bridge (bridge B4) with the 23S rRNA of the 50S subunit in the ribosome. This is Small ribosomal subunit protein uS15 from Rhodopseudomonas palustris (strain TIE-1).